The chain runs to 252 residues: Probable endonuclease 4 (252 aa).

The Zn(2+) site is built by histidine 56, histidine 96, glutamate 129, aspartate 162, histidine 165, histidine 191, aspartate 204, histidine 206, and glutamate 233.

This sequence belongs to the AP endonuclease 2 family. Zn(2+) serves as cofactor.

The enzyme catalyses Endonucleolytic cleavage to 5'-phosphooligonucleotide end-products.. Functionally, endonuclease IV plays a role in DNA repair. It cleaves phosphodiester bonds at apurinic or apyrimidinic (AP) sites, generating a 3'-hydroxyl group and a 5'-terminal sugar phosphate. The sequence is that of Probable endonuclease 4 from Mycobacterium tuberculosis (strain ATCC 25177 / H37Ra).